The primary structure comprises 123 residues: Glycine cleavage system H protein (123 aa).

The 83-residue stretch at 22–104 (VATVGITSYA…FGAGWLVKVR (83 aa)) folds into the Lipoyl-binding domain. Residue lysine 63 is modified to N6-lipoyllysine.

The protein belongs to the GcvH family. In terms of assembly, the glycine cleavage system is composed of four proteins: P, T, L and H. (R)-lipoate is required as a cofactor.

Its function is as follows. The glycine cleavage system catalyzes the degradation of glycine. The H protein shuttles the methylamine group of glycine from the P protein to the T protein. The polypeptide is Glycine cleavage system H protein (Clavibacter sepedonicus (Clavibacter michiganensis subsp. sepedonicus)).